A 596-amino-acid polypeptide reads, in one-letter code: MNTAIQAALDHVVQSLQQEGILPSDWNNNSTLTRTKDRSHGDFASNIAMVGSKAAGMKPRDLAEKILASLPEVADITKAEIAGPGFINFFLNADQRFAVLDQIQAQGQYYGQTQVNAEKKIQVEFVSANPTSSLHVGHGRGAAYGMTVANLLEATGAQVDREYYVNDAGRQMDILATSTYLRYLELLGQPLVFPKNAYQGDYVKEIAQSIIDKDGDAYVRSVADVYRNVPEDVQYAEELDSEGNKVVLSGDKEKHIDGLIANSQQLIGQGYRVFHQAALKAILDDIKDDLADFGVTFDQWFSEASLTQKIDEALQTLDQRGYLYEKEGNIWFKSTKFGDEKDRVVKRRNGQTTYFASDIAYHLDKLQRGYTHIVDIWGSDHHGYIARVKAAIDAMGYDSSKLTVLLVQFVSLWRGGEMVQMSSRSGQFVTLRELRQEVGNDAARFYYVMRKSEQHIDFDLDLAVSQSKDNAVYYIQYAHARICRMLEKANSTQMRFNQTQARQFANRLDLDAETEILAKLAAYPDILVRAANAYEPHQIGNYLKELAALFHGWYNEHKVLTEDVELTQARLLLSVNVQQVLRNGLDLLGVSAPEAM.

Residues 128–138 (ANPTSSLHVGH) carry the 'HIGH' region motif.

Belongs to the class-I aminoacyl-tRNA synthetase family. In terms of assembly, monomer.

It is found in the cytoplasm. The enzyme catalyses tRNA(Arg) + L-arginine + ATP = L-arginyl-tRNA(Arg) + AMP + diphosphate. The chain is Arginine--tRNA ligase from Acinetobacter baylyi (strain ATCC 33305 / BD413 / ADP1).